The sequence spans 2073 residues: Dedicator of cytokinesis protein 11 (2073 aa).

Ser-12 is subject to Phosphoserine. Thr-16 is subject to Phosphothreonine. Residues Ser-23 and Ser-161 each carry the phosphoserine modification. Residues Gly-165–Gln-272 enclose the PH domain. Phosphotyrosine is present on Tyr-248. Phosphoserine occurs at positions 306, 440, and 445. Residues Lys-640–Glu-818 form the C2 DOCK-type domain. Positions Phe-1226–Ser-1267 are disordered. Phosphoserine occurs at positions 1237 and 1240. The DOCKER domain maps to Lys-1609–Leu-2036.

The protein belongs to the DOCK family. In terms of assembly, interacts with CDC42.

Functionally, guanine nucleotide-exchange factor (GEF) that activates CDC42 by exchanging bound GDP for free GTP. Required for marginal zone (MZ) B-cell development, is associated with early bone marrow B-cell development, MZ B-cell formation, MZ B-cell number and marginal metallophilic macrophages morphology. Facilitates filopodia formation through the activation of CDC42. In Homo sapiens (Human), this protein is Dedicator of cytokinesis protein 11.